The sequence spans 438 residues: V-type ATP synthase beta chain (438 aa).

It belongs to the ATPase alpha/beta chains family.

Functionally, produces ATP from ADP in the presence of a proton gradient across the membrane. The V-type beta chain is a regulatory subunit. This chain is V-type ATP synthase beta chain (atpB), found in Chlamydia trachomatis serovar D (strain ATCC VR-885 / DSM 19411 / UW-3/Cx).